Here is a 486-residue protein sequence, read N- to C-terminus: CUGBP Elav-like family member 1 (486 aa).

M1 is subject to N-acetylmethionine. Position 4 is a phosphothreonine (T4). RRM domains follow at residues 16 to 99 (IKMF…PADS) and 108 to 188 (RKLF…FADT). A Glycyl lysine isopeptide (Lys-Gly) (interchain with G-Cter in SUMO2) cross-link involves residue K109. Residues S179 and S302 each carry the phosphoserine modification. The interval 277–309 (TPSGTNALTTSSSPLSVLTSSGSSPSSSSSNSV) is disordered. Residues 284 to 309 (LTTSSSPLSVLTSSGSSPSSSSSNSV) are compositionally biased toward low complexity. Residues 401-479 (ANLFIYHLPQ…KRLKVQLKRS (79 aa)) form the RRM 3 domain.

Belongs to the CELF/BRUNOL family. As to quaternary structure, component of an EIF2 complex at least composed of CELF1/CUGBP1, CALR, CALR3, EIF2S1, EIF2S2, HSP90B1 and HSPA5. Associates with polysomes. Interacts with HNRNPH1; the interaction in RNA-dependent. Interacts with PARN. In terms of processing, phosphorylated. Its phosphorylation status increases in senescent cells. In terms of tissue distribution, ubiquitous.

It localises to the nucleus. The protein localises to the cytoplasm. Functionally, RNA-binding protein implicated in the regulation of several post-transcriptional events. Involved in pre-mRNA alternative splicing, mRNA translation and stability. Mediates exon inclusion and/or exclusion in pre-mRNA that are subject to tissue-specific and developmentally regulated alternative splicing. Specifically activates exon 5 inclusion of cardiac isoforms of TNNT2 during heart remodeling at the juvenile to adult transition. Acts both as an activator and as a repressor of a pair of coregulated exons: promotes inclusion of the smooth muscle (SM) exon but exclusion of the non-muscle (NM) exon in actinin pre-mRNAs. Activates SM exon 5 inclusion by antagonizing the repressive effect of PTB. Promotes exclusion of exon 11 of the INSR pre-mRNA. Inhibits, together with HNRNPH1, insulin receptor (IR) pre-mRNA exon 11 inclusion in myoblast. Increases translation and controls the choice of translation initiation codon of CEBPB mRNA. Increases mRNA translation of CEBPB in aging liver. Increases translation of CDKN1A mRNA by antagonizing the repressive effect of CALR3. Mediates rapid cytoplasmic mRNA deadenylation. Recruits the deadenylase PARN to the poly(A) tail of EDEN-containing mRNAs to promote their deadenylation. Required for completion of spermatogenesis. Binds to (CUG)n triplet repeats in the 3'-UTR of transcripts such as DMPK and to Bruno response elements (BREs). Binds to muscle-specific splicing enhancer (MSE) intronic sites flanking the alternative exon 5 of TNNT2 pre-mRNA. Binds to AU-rich sequences (AREs or EDEN-like) localized in the 3'-UTR of JUN and FOS mRNAs. Binds to the IR RNA. Binds to the 5'-region of CDKN1A and CEBPB mRNAs. Binds with the 5'-region of CEBPB mRNA in aging liver. May be a specific regulator of miRNA biogenesis. Binds to primary microRNA pri-MIR140 and, with CELF2, negatively regulates the processing to mature miRNA. This Homo sapiens (Human) protein is CUGBP Elav-like family member 1 (CELF1).